A 129-amino-acid chain; its full sequence is Ribonuclease VapC12 (129 aa).

The Mg(2+) site is built by Asp5 and Asp94.

It belongs to the PINc/VapC protein family. Mg(2+) is required as a cofactor.

In terms of biological role, toxic component of a type II toxin-antitoxin (TA) system. An RNase. The cognate antitoxin is VapB12. In Mycobacterium tuberculosis (strain CDC 1551 / Oshkosh), this protein is Ribonuclease VapC12.